The following is a 421-amino-acid chain: Enolase (421 aa).

A (2R)-2-phosphoglycerate-binding site is contributed by Gln165. The Proton donor role is filled by Glu207. Residues Asp244, Glu285, and Asp312 each contribute to the Mg(2+) site. 4 residues coordinate (2R)-2-phosphoglycerate: Lys337, Arg366, Ser367, and Lys388. Lys337 (proton acceptor) is an active-site residue.

The protein belongs to the enolase family. The cofactor is Mg(2+).

Its subcellular location is the cytoplasm. The protein resides in the secreted. It localises to the cell surface. The catalysed reaction is (2R)-2-phosphoglycerate = phosphoenolpyruvate + H2O. The protein operates within carbohydrate degradation; glycolysis; pyruvate from D-glyceraldehyde 3-phosphate: step 4/5. In terms of biological role, catalyzes the reversible conversion of 2-phosphoglycerate (2-PG) into phosphoenolpyruvate (PEP). It is essential for the degradation of carbohydrates via glycolysis. This Ehrlichia ruminantium (strain Welgevonden) protein is Enolase.